The following is a 210-amino-acid chain: Large ribosomal subunit protein uL15 (210 aa).

Disordered regions lie at residues 1–64 (MADD…AAPR) and 76–104 (AAGA…TKGT). The segment covering 9–54 (EAAAKPVAEKATATALAKKAPAKAAAADKAAPAAKGETVAAKPAKA) has biased composition (low complexity). Residues 79-93 (AKKEKTRVGRGEGSK) show a composition bias toward basic and acidic residues.

It belongs to the universal ribosomal protein uL15 family. In terms of assembly, part of the 50S ribosomal subunit.

Binds to the 23S rRNA. In Leifsonia xyli subsp. xyli (strain CTCB07), this protein is Large ribosomal subunit protein uL15.